Here is a 70-residue protein sequence, read N- to C-terminus: Brevinin-1MT2 (70 aa).

Residues 1 to 22 (MFTLKKSMLLLFFLGTINLSLC) form the signal peptide. A propeptide spanning residues 23–44 (EQERNADEEERRDDDEMDVEVE) is cleaved from the precursor. Cys64 and Cys70 are disulfide-bonded.

It belongs to the frog skin active peptide (FSAP) family. Brevinin subfamily. Expressed by the skin glands.

The protein resides in the secreted. Antimicrobial peptide with activity against a variety of Gram-negative and Gram-positive bacteria and against fungi. Shows strong hemolytic activity against human erythrocytes. The polypeptide is Brevinin-1MT2 (Amolops mantzorum (Sichuan torrent frog)).